Consider the following 172-residue polypeptide: MGIGVNTDLPRNEQIKAPKVRVVDENGKMIGVMPTRKALELAREKGLDLVLVAPNENPPVARIMDYGKYKYQLTKKQKENKKKPVQMKQMKFRLKIDEHDYQTKVKHIRRFLEDGHKVRVVVMFIGREMMFAEKGKEILERVIKDTEDLATVESPPKMEGRDMWMVLKPKNS.

Belongs to the IF-3 family. Monomer.

The protein localises to the cytoplasm. Functionally, IF-3 binds to the 30S ribosomal subunit and shifts the equilibrium between 70S ribosomes and their 50S and 30S subunits in favor of the free subunits, thus enhancing the availability of 30S subunits on which protein synthesis initiation begins. In Thermotoga maritima (strain ATCC 43589 / DSM 3109 / JCM 10099 / NBRC 100826 / MSB8), this protein is Translation initiation factor IF-3.